The following is a 742-amino-acid chain: Two-component response regulator-like PRR37 (742 aa).

Residues 63 to 181 form the Response regulatory domain; it reads KVLLVDSDDS…ELKNLWQHVW (119 aa). The span at 186–195 shows a compositional bias: low complexity; it reads SSSGSGSESG. Disordered regions lie at residues 186–249, 290–346, 375–402, 478–570, 590–671, and 697–742; these read SSSG…SWTK, PCTS…PLQN, DAQQ…NRDN, MKSN…VQSN, NGGS…GNDM, and NFGK…AADR. Over residues 236–248 the composition is skewed to polar residues; sequence DNGSGTQAQSSWT. The span at 299 to 313 shows a compositional bias: basic and acidic residues; that stretch reads KQKETNDDFKGKDLE. The span at 318–330 shows a compositional bias: polar residues; it reads RNLNTAYQSSPNE. Residues 331-341 show a composition bias toward basic and acidic residues; it reads RSIKPTDRRNE. The segment covering 380 to 390 has biased composition (polar residues); sequence ARATNAPNCSS. Residues 490–502 show a composition bias toward low complexity; the sequence is GSNGSSNNNDMGS. A compositionally biased stretch (polar residues) spans 503–512; the sequence is TTKNVVTKPS. Over residues 618-634 the composition is skewed to low complexity; sequence NGSNSGSNNGSNGQNGS. Over residues 656-667 the composition is skewed to gly residues; that stretch reads GPGGGNGSGSGS. A CCT domain is found at 682–724; sequence RVAAVIKFRQKRKERNFGKKVRYQSRKRLAEQRPRVRGQFVRQ. Residues 697 to 708 are compositionally biased toward basic residues; that stretch reads NFGKKVRYQSRK. Over residues 719-731 the composition is skewed to low complexity; the sequence is GQFVRQAVQDQQQ.

The protein belongs to the ARR-like family.

The protein localises to the nucleus. Its function is as follows. Controls photoperiodic flowering response. Seems to be one of the component of the circadian clock. Expression of several members of the ARR-like family is controlled by circadian rhythm. The particular coordinated sequential expression of PRR73, PRR37, PRR95, PRR59 and PPR1 result to circadian waves that may be at the basis of the endogenous circadian clock. In Oryza sativa subsp. indica (Rice), this protein is Two-component response regulator-like PRR37 (PRR37).